Here is a 209-residue protein sequence, read N- to C-terminus: tRNA (guanine-N(7)-)-methyltransferase (209 aa).

The S-adenosyl-L-methionine site is built by aspartate 35, glutamate 60, asparagine 87, and aspartate 113. Aspartate 113 is a catalytic residue. The substrate site is built by lysine 117 and aspartate 149.

This sequence belongs to the class I-like SAM-binding methyltransferase superfamily. TrmB family.

It carries out the reaction guanosine(46) in tRNA + S-adenosyl-L-methionine = N(7)-methylguanosine(46) in tRNA + S-adenosyl-L-homocysteine. It functions in the pathway tRNA modification; N(7)-methylguanine-tRNA biosynthesis. Functionally, catalyzes the formation of N(7)-methylguanine at position 46 (m7G46) in tRNA. The protein is tRNA (guanine-N(7)-)-methyltransferase of Prochlorococcus marinus (strain MIT 9215).